The primary structure comprises 243 residues: Ubiquinone/menaquinone biosynthesis C-methyltransferase UbiE (243 aa).

S-adenosyl-L-methionine is bound by residues Thr69, Asp90, and 116 to 117 (DA).

Belongs to the class I-like SAM-binding methyltransferase superfamily. MenG/UbiE family.

The catalysed reaction is a 2-demethylmenaquinol + S-adenosyl-L-methionine = a menaquinol + S-adenosyl-L-homocysteine + H(+). It catalyses the reaction a 2-methoxy-6-(all-trans-polyprenyl)benzene-1,4-diol + S-adenosyl-L-methionine = a 5-methoxy-2-methyl-3-(all-trans-polyprenyl)benzene-1,4-diol + S-adenosyl-L-homocysteine + H(+). It participates in quinol/quinone metabolism; menaquinone biosynthesis; menaquinol from 1,4-dihydroxy-2-naphthoate: step 2/2. It functions in the pathway cofactor biosynthesis; ubiquinone biosynthesis. Methyltransferase required for the conversion of demethylmenaquinol (DMKH2) to menaquinol (MKH2) and the conversion of 2-polyprenyl-6-methoxy-1,4-benzoquinol (DDMQH2) to 2-polyprenyl-3-methyl-6-methoxy-1,4-benzoquinol (DMQH2). This is Ubiquinone/menaquinone biosynthesis C-methyltransferase UbiE from Burkholderia multivorans (strain ATCC 17616 / 249).